We begin with the raw amino-acid sequence, 547 residues long: Rho GTPase-activating protein 36 (547 aa).

The first 40 residues, Met-1–Gly-40, serve as a signal peptide directing secretion. In terms of domain architecture, Rho-GAP spans Met-226–Phe-426. Residues Ala-485–Pro-547 are disordered. Residues Glu-524–Lys-539 are compositionally biased toward basic and acidic residues.

In terms of assembly, may interacts (via the Rho-GAP domain) with the active form of RAC1. In terms of tissue distribution, detected in the outer root sheath of hair follicles at the level of the stem cell bulge, during the anagen and telogen phases of hair growth (at protein level).

GTPase activator for the Rho-type GTPases by converting them to an inactive GDP-bound state. This chain is Rho GTPase-activating protein 36 (ARHGAP36), found in Homo sapiens (Human).